Consider the following 443-residue polypeptide: Chromosomal replication initiator protein DnaA (443 aa).

A domain I, interacts with DnaA modulators region spans residues 1–80 (MTSQFASLWQ…LGESVEVRFF (80 aa)). The interval 80–104 (FTPSADSRRSEPSRRPVATEESSPP) is domain II. The tract at residues 83 to 105 (SADSRRSEPSRRPVATEESSPPL) is disordered. Residues 85–97 (DSRRSEPSRRPVA) are compositionally biased toward basic and acidic residues. Residues 105 to 321 (LLNPKYTFDT…GALNRVIAYA (217 aa)) form a domain III, AAA+ region region. Residues G149, G151, K152, and T153 each contribute to the ATP site. A domain IV, binds dsDNA region spans residues 322 to 443 (NLSGKSLTSE…QVLKEKIQRA (122 aa)).

Belongs to the DnaA family. As to quaternary structure, oligomerizes as a right-handed, spiral filament on DNA at oriC.

Its subcellular location is the cytoplasm. Functionally, plays an essential role in the initiation and regulation of chromosomal replication. ATP-DnaA binds to the origin of replication (oriC) to initiate formation of the DNA replication initiation complex once per cell cycle. Binds the DnaA box (a 9 base pair repeat at the origin) and separates the double-stranded (ds)DNA. Forms a right-handed helical filament on oriC DNA; dsDNA binds to the exterior of the filament while single-stranded (ss)DNA is stabiized in the filament's interior. The ATP-DnaA-oriC complex binds and stabilizes one strand of the AT-rich DNA unwinding element (DUE), permitting loading of DNA polymerase. After initiation quickly degrades to an ADP-DnaA complex that is not apt for DNA replication. Binds acidic phospholipids. The polypeptide is Chromosomal replication initiator protein DnaA (Heliobacterium modesticaldum (strain ATCC 51547 / Ice1)).